Here is a 145-residue protein sequence, read N- to C-terminus: 3-dehydroquinate dehydratase (145 aa).

The Proton acceptor role is filled by tyrosine 23. Substrate-binding residues include asparagine 75, histidine 81, and aspartate 88. The Proton donor role is filled by histidine 101. Residues 102-103 and arginine 112 contribute to the substrate site; that span reads IS.

The protein belongs to the type-II 3-dehydroquinase family. In terms of assembly, homododecamer.

The enzyme catalyses 3-dehydroquinate = 3-dehydroshikimate + H2O. It participates in metabolic intermediate biosynthesis; chorismate biosynthesis; chorismate from D-erythrose 4-phosphate and phosphoenolpyruvate: step 3/7. Catalyzes a trans-dehydration via an enolate intermediate. The polypeptide is 3-dehydroquinate dehydratase (Caldicellulosiruptor saccharolyticus (strain ATCC 43494 / DSM 8903 / Tp8T 6331)).